Reading from the N-terminus, the 238-residue chain is Histone deacetylase 7 (238 aa).

Disordered stretches follow at residues threonine 1–alanine 26 and glutamine 47–glutamate 72. Residues serine 58–proline 158 are interaction with MEF2A. Phosphoserine is present on residues serine 118 and serine 164. A disordered region spans residues proline 145 to glycine 238. Basic and acidic residues predominate over residues lysine 176–serine 190. Position 190 is a phosphoserine; by PKD/PRKD2 (serine 190). Residues serine 206–proline 221 show a composition bias toward low complexity.

Belongs to the histone deacetylase family. HD type 2 subfamily. As to quaternary structure, interacts with HDAC1, HDAC2, HDAC3, HDAC4, HDAC5, NCOR1, NCOR2, SIN3A, SIN3B, RBBP4, RBBP7, MTA1L1, SAP30 and MBD3. Interacts with KAT5 and EDNRA. Interacts with the 14-3-3 protein YWHAE, MEF2A, MEF2B and MEF2C. Interacts with ZMYND15. Interacts with KDM5B. Interacts with PML. Interacts with FOXP3. Interacts with RARA. In terms of processing, may be phosphorylated by CaMK1. Phosphorylated by the PKC kinases PKN1 and PKN2, impairing nuclear import. Phosphorylation at Ser-164 by MARK2, MARK3 and PRKD1 promotes interaction with 14-3-3 proteins and export from the nucleus. Phosphorylation at Ser-164 is a prerequisite for phosphorylation at Ser-190.

It localises to the nucleus. Its subcellular location is the cytoplasm. The enzyme catalyses N(6)-acetyl-L-lysyl-[histone] + H2O = L-lysyl-[histone] + acetate. It carries out the reaction N(6)-acetyl-L-lysyl-[protein] + H2O = L-lysyl-[protein] + acetate. Its function is as follows. Responsible for the deacetylation of lysine residues on the N-terminal part of the core histones (H2A, H2B, H3 and H4). Histone deacetylation gives a tag for epigenetic repression and plays an important role in transcriptional regulation, cell cycle progression and developmental events. Histone deacetylases act via the formation of large multiprotein complexes. Involved in muscle maturation by repressing transcription of myocyte enhancer factors such as MEF2A, MEF2B and MEF2C. During muscle differentiation, it shuttles into the cytoplasm, allowing the expression of myocyte enhancer factors. May be involved in Epstein-Barr virus (EBV) latency, possibly by repressing the viral BZLF1 gene. Positively regulates the transcriptional repressor activity of FOXP3. Serves as a corepressor of RARA, causing its deacetylation and inhibition of RARE DNA element binding. In association with RARA, plays a role in the repression of microRNA-10a and thereby in the inflammatory response. Also acetylates non-histone proteins, such as ALKBH5. The chain is Histone deacetylase 7 (Hdac7) from Rattus norvegicus (Rat).